A 363-amino-acid polypeptide reads, in one-letter code: MKTLEVKTSSATYPVYIGDGIKRNIVDLMTSTGHSYTKLLIVTDTAVDAIYGDEMVRLLEQKWSVHKVVVPSGEQSKSFAEFEHIHTKAIQFQLDRSSCIIALGGGVIGDLAGFVAASYMRGIDFIQVPTTLLAHDSAVGGKTGINHPLGKNLIGAFHQPKAVIYDTSMLETLSQTEMRSGFAEVIKHALISSEDFLKELMSIRSLDECSKSELAHMLYQGIEVKASIVQKDEREQGVRAFLNLGHTLGHAIEAEYGYGVITHGDAIAIGMQFALYVSEKKLGLSLHRTELKEWMKKLGFPVQVTQDISTKTFVDRMIGDKKARGGTVQFVLLKQVGDAVLQSFTKDDLHQWLDEWKREEGCL.

Residues 72–77 (SGEQSK), 106–110 (GVIGD), 130–131 (TT), lysine 142, and lysine 151 each bind NAD(+). Glutamate 184, histidine 246, and histidine 263 together coordinate Zn(2+).

Belongs to the sugar phosphate cyclases superfamily. Dehydroquinate synthase family. It depends on Co(2+) as a cofactor. Zn(2+) serves as cofactor. Requires NAD(+) as cofactor.

It localises to the cytoplasm. The enzyme catalyses 7-phospho-2-dehydro-3-deoxy-D-arabino-heptonate = 3-dehydroquinate + phosphate. Its pathway is metabolic intermediate biosynthesis; chorismate biosynthesis; chorismate from D-erythrose 4-phosphate and phosphoenolpyruvate: step 2/7. Catalyzes the conversion of 3-deoxy-D-arabino-heptulosonate 7-phosphate (DAHP) to dehydroquinate (DHQ). The chain is 3-dehydroquinate synthase from Bacillus pumilus (strain SAFR-032).